The following is a 479-amino-acid chain: Beta-monoglucosyldiacylglycerol synthase (479 aa).

The next 4 membrane-spanning stretches (helical) occupy residues 48 to 68 (AAVMLMAIWTVVITLHYWVWG), 363 to 383 (FLLMQYLLPTAAVPDLLMALW), 389 to 409 (LLTPLSYLAIGFSCWGMYYGL), and 428 to 448 (LARTIGGTIYMFHWLIIMPAV).

The protein belongs to the glycosyltransferase 2 family. It depends on Mg(2+) as a cofactor.

The protein localises to the membrane. The catalysed reaction is a 1,2-diacyl-sn-glycerol + UDP-alpha-D-glucose = a 1,2-diacyl-3-O-(beta-D-glucopyranosyl)-sn-glycerol + UDP + H(+). In terms of biological role, glucosyltransferase involved in the biosynthesis of the non-bilayer-forming membrane lipid beta-monoglucosyldiacylglycerol which contributes to regulate the properties and stability of the membrane. Catalyzes the transfer of a glucosyl residue from UDP-Glc to diacylglycerol (DAG) acceptor to form the corresponding beta-glucosyl-DAG (1,2-diacyl-3-O-(beta-D-glucopyranosyl)-sn-glycerol). It can only use UDP-Glc as sugar donor. Two types of DAG (dipalmitoyl-DAG (DPDAG) and 1-oleoyl-2-palmitoyl-DAG (OPDAG)) can be used as sugar acceptors, but OPDAG is preferred. This Synechocystis sp. (strain ATCC 27184 / PCC 6803 / Kazusa) protein is Beta-monoglucosyldiacylglycerol synthase.